A 137-amino-acid polypeptide reads, in one-letter code: Putative pre-16S rRNA nuclease (137 aa).

It belongs to the YqgF nuclease family.

Its subcellular location is the cytoplasm. Functionally, could be a nuclease involved in processing of the 5'-end of pre-16S rRNA. This Clostridium botulinum (strain Eklund 17B / Type B) protein is Putative pre-16S rRNA nuclease.